A 311-amino-acid polypeptide reads, in one-letter code: 4-hydroxy-tetrahydrodipicolinate synthase (311 aa).

Threonine 51 is a binding site for pyruvate. The Proton donor/acceptor role is filled by tyrosine 140. Lysine 168 acts as the Schiff-base intermediate with substrate in catalysis. Isoleucine 209 contributes to the pyruvate binding site.

This sequence belongs to the DapA family. Homotetramer; dimer of dimers.

Its subcellular location is the cytoplasm. The catalysed reaction is L-aspartate 4-semialdehyde + pyruvate = (2S,4S)-4-hydroxy-2,3,4,5-tetrahydrodipicolinate + H2O + H(+). The protein operates within amino-acid biosynthesis; L-lysine biosynthesis via DAP pathway; (S)-tetrahydrodipicolinate from L-aspartate: step 3/4. Its function is as follows. Catalyzes the condensation of (S)-aspartate-beta-semialdehyde [(S)-ASA] and pyruvate to 4-hydroxy-tetrahydrodipicolinate (HTPA). The chain is 4-hydroxy-tetrahydrodipicolinate synthase from Streptococcus gordonii (strain Challis / ATCC 35105 / BCRC 15272 / CH1 / DL1 / V288).